Reading from the N-terminus, the 229-residue chain is Ribonuclease 3 (229 aa).

In terms of domain architecture, RNase III spans 5 to 127 (LSRLERKLGH…LIGAIYLDAG (123 aa)). Glu-40 contacts Mg(2+). The active site involves Asp-44. Mg(2+) contacts are provided by Asp-113 and Glu-116. Glu-116 is an active-site residue. The DRBM domain maps to 154 to 224 (DPKTRLQEFL…AAAALIALGV (71 aa)).

This sequence belongs to the ribonuclease III family. Homodimer. It depends on Mg(2+) as a cofactor.

Its subcellular location is the cytoplasm. It catalyses the reaction Endonucleolytic cleavage to 5'-phosphomonoester.. In terms of biological role, digests double-stranded RNA. Involved in the processing of primary rRNA transcript to yield the immediate precursors to the large and small rRNAs (23S and 16S). Processes some mRNAs, and tRNAs when they are encoded in the rRNA operon. Processes pre-crRNA and tracrRNA of type II CRISPR loci if present in the organism. In Ectopseudomonas mendocina (strain ymp) (Pseudomonas mendocina), this protein is Ribonuclease 3.